Here is a 380-residue protein sequence, read N- to C-terminus: Queuine tRNA-ribosyltransferase (380 aa).

Catalysis depends on Asp-96, which acts as the Proton acceptor. Residues 96-100 (DSGGF), Asp-150, Gln-193, and Gly-220 each bind substrate. An RNA binding region spans residues 251–257 (GVGAPDS). Asp-270 acts as the Nucleophile in catalysis. Residues 275-279 (TRIAR) form an RNA binding; important for wobble base 34 recognition region. Residues Cys-308, Cys-310, Cys-313, and His-339 each coordinate Zn(2+).

This sequence belongs to the queuine tRNA-ribosyltransferase family. In terms of assembly, homodimer. Within each dimer, one monomer is responsible for RNA recognition and catalysis, while the other monomer binds to the replacement base PreQ1. Zn(2+) serves as cofactor.

The enzyme catalyses 7-aminomethyl-7-carbaguanine + guanosine(34) in tRNA = 7-aminomethyl-7-carbaguanosine(34) in tRNA + guanine. It functions in the pathway tRNA modification; tRNA-queuosine biosynthesis. Catalyzes the base-exchange of a guanine (G) residue with the queuine precursor 7-aminomethyl-7-deazaguanine (PreQ1) at position 34 (anticodon wobble position) in tRNAs with GU(N) anticodons (tRNA-Asp, -Asn, -His and -Tyr). Catalysis occurs through a double-displacement mechanism. The nucleophile active site attacks the C1' of nucleotide 34 to detach the guanine base from the RNA, forming a covalent enzyme-RNA intermediate. The proton acceptor active site deprotonates the incoming PreQ1, allowing a nucleophilic attack on the C1' of the ribose to form the product. After dissociation, two additional enzymatic reactions on the tRNA convert PreQ1 to queuine (Q), resulting in the hypermodified nucleoside queuosine (7-(((4,5-cis-dihydroxy-2-cyclopenten-1-yl)amino)methyl)-7-deazaguanosine). The polypeptide is Queuine tRNA-ribosyltransferase (Streptococcus thermophilus (strain CNRZ 1066)).